We begin with the raw amino-acid sequence, 358 residues long: MYDRLQAVEDRYDELNELLSDPDVVSDPKRLRDLSKEQSGITATVETYREYKNVNEQINETKELLGEKLDDEMREMAKEEFAELQKEKTDLEERLKLLLVPKDPNDDKNVILEIRGAAGGDEAALFAGDLFRMYSKYAESRGWKVEIMDANPTGIGGYKEIIAMMNGNDAFSRMKYENGAHRVQRVPETESGGRIHTSTATVAILPEAEEVEIELHDKDIRTDTFASTGAGGQSVNTTMSAVRLTHIPTGIVVSMQDERSQLKNKDKAMKVLRARVYDKFEREAREEYDANRKSAVGTGDRSERIRTYNYPQNRVTDHRIGLTIQKLDQIMEGKLDEIIDALILEDQTSKLEHLNDAN.

Gln233 is subject to N5-methylglutamine.

This sequence belongs to the prokaryotic/mitochondrial release factor family. Methylated by PrmC. Methylation increases the termination efficiency of RF1.

It localises to the cytoplasm. Functionally, peptide chain release factor 1 directs the termination of translation in response to the peptide chain termination codons UAG and UAA. The polypeptide is Peptide chain release factor 1 (Listeria monocytogenes serovar 1/2a (strain ATCC BAA-679 / EGD-e)).